Consider the following 292-residue polypeptide: Elongation factor Ts (292 aa).

The segment at 79–82 is involved in Mg(2+) ion dislocation from EF-Tu; it reads TDFV.

It belongs to the EF-Ts family.

The protein localises to the cytoplasm. Its function is as follows. Associates with the EF-Tu.GDP complex and induces the exchange of GDP to GTP. It remains bound to the aminoacyl-tRNA.EF-Tu.GTP complex up to the GTP hydrolysis stage on the ribosome. The polypeptide is Elongation factor Ts (Xanthomonas euvesicatoria pv. vesicatoria (strain 85-10) (Xanthomonas campestris pv. vesicatoria)).